A 210-amino-acid chain; its full sequence is Outer-membrane lipoprotein carrier protein (210 aa).

An N-terminal signal peptide occupies residues 1 to 23 (MKKRIQKTILTVLFSSLSSIAFA).

Belongs to the LolA family. Monomer.

The protein resides in the periplasm. Functionally, participates in the translocation of lipoproteins from the inner membrane to the outer membrane. Only forms a complex with a lipoprotein if the residue after the N-terminal Cys is not an aspartate (The Asp acts as a targeting signal to indicate that the lipoprotein should stay in the inner membrane). The polypeptide is Outer-membrane lipoprotein carrier protein (Haemophilus ducreyi (strain 35000HP / ATCC 700724)).